The sequence spans 637 residues: 1-deoxy-D-xylulose-5-phosphate synthase (637 aa).

Thiamine diphosphate-binding positions include H88 and 129–131; that span reads GHS. D160 is a binding site for Mg(2+). Thiamine diphosphate-binding positions include 161 to 162, N189, F293, and E370; that span reads GA. N189 is a Mg(2+) binding site.

The protein belongs to the transketolase family. DXPS subfamily. Homodimer. Mg(2+) serves as cofactor. It depends on thiamine diphosphate as a cofactor.

It carries out the reaction D-glyceraldehyde 3-phosphate + pyruvate + H(+) = 1-deoxy-D-xylulose 5-phosphate + CO2. It functions in the pathway metabolic intermediate biosynthesis; 1-deoxy-D-xylulose 5-phosphate biosynthesis; 1-deoxy-D-xylulose 5-phosphate from D-glyceraldehyde 3-phosphate and pyruvate: step 1/1. Its function is as follows. Catalyzes the acyloin condensation reaction between C atoms 2 and 3 of pyruvate and glyceraldehyde 3-phosphate to yield 1-deoxy-D-xylulose-5-phosphate (DXP). The chain is 1-deoxy-D-xylulose-5-phosphate synthase from Acinetobacter baumannii (strain AYE).